We begin with the raw amino-acid sequence, 79 residues long: Conotoxin 1 (79 aa).

The signal sequence occupies residues 1–22 (MKLTCVLIITVLFLTASQLITA). Residues 23–46 (DYSRDQRQYRAVRLGDEMRTFKGA) constitute a propeptide that is removed on maturation. 3 cysteine pairs are disulfide-bonded: Cys49–Cys62, Cys56–Cys67, and Cys61–Cys77.

It belongs to the conotoxin O1 superfamily. As to expression, expressed by the venom duct.

It localises to the secreted. The polypeptide is Conotoxin 1 (Conus vexillum (Flag cone)).